Here is a 366-residue protein sequence, read N- to C-terminus: Alanine racemase (366 aa).

Residue Lys-35 is the Proton acceptor; specific for D-alanine of the active site. Residue Lys-35 is modified to N6-(pyridoxal phosphate)lysine. Arg-130 is a substrate binding site. Residue Tyr-254 is the Proton acceptor; specific for L-alanine of the active site. Met-302 serves as a coordination point for substrate.

Belongs to the alanine racemase family. It depends on pyridoxal 5'-phosphate as a cofactor.

The enzyme catalyses L-alanine = D-alanine. It functions in the pathway amino-acid biosynthesis; D-alanine biosynthesis; D-alanine from L-alanine: step 1/1. Its function is as follows. Catalyzes the interconversion of L-alanine and D-alanine. May also act on other amino acids. The sequence is that of Alanine racemase (alr) from Variovorax paradoxus (strain S110).